The following is a 239-amino-acid chain: Homeobox protein Nkx-2.8 (239 aa).

A compositionally biased stretch (polar residues) spans methionine 1–valine 11. Residues methionine 1–arginine 87 form a disordered region. A compositionally biased stretch (basic and acidic residues) spans aspartate 21–proline 32. Residues serine 62–serine 79 are compositionally biased toward low complexity. The segment at residues arginine 84 to arginine 143 is a DNA-binding region (homeobox).

Belongs to the NK-2 homeobox family.

The protein resides in the nucleus. This Homo sapiens (Human) protein is Homeobox protein Nkx-2.8 (NKX2-8).